Here is a 309-residue protein sequence, read N- to C-terminus: MAPSHWRLILNGKSTDNEDLREAVGVLRKRGIQLDVRVTWEEGDAERYVAEAIADGVQTVVAAGGDGTLSEVAAALAHHQDDAATLPSLGLVPLGTANDFATAAMIPLEPLGALGLIAERAAEPIDLLRIDADHGPHWCANVASGGFGTQVTVETDAGLKKMLGGLAYLITGMSRLGRIDPISAHFTGPDFSWEGEFIALGLGNGRQAGGGQALCPEALIDDGLLDVTIVPALNGEVAATLGTLVTGGKQAALERVAVRTRLPWLEIASVQPLTLNLDGEPETSRHFRVECVAARLRMHLPIDCPLRSA.

In terms of domain architecture, DAGKc spans 1–134; it reads MAPSHWRLIL…IDLLRIDADH (134 aa). Residues T39, 65–71, and T96 contribute to the ATP site; that span reads GDGTLSE. L219, D222, and L224 together coordinate Mg(2+). The active-site Proton acceptor is the E280.

The protein belongs to the diacylglycerol/lipid kinase family. YegS lipid kinase subfamily. Mg(2+) serves as cofactor. Requires Ca(2+) as cofactor.

The protein localises to the cytoplasm. Probably phosphorylates lipids; the in vivo substrate is unknown. This is Probable lipid kinase YegS-like from Xanthomonas campestris pv. campestris (strain 8004).